An 818-amino-acid polypeptide reads, in one-letter code: Phenylalanine--tRNA ligase beta subunit (818 aa).

Residues 39–148 form the tRNA-binding domain; that stretch reads AAELQKFEVA…EDAVVGENFT (110 aa). In terms of domain architecture, B5 spans 423–498; that stretch reads SQKKPLDFSA…RIYGYDKIES (76 aa). 4 residues coordinate Mg(2+): D476, D482, E485, and E486. Residues 724-817 form the FDX-ACB domain; sequence SDFQANFRDY…ISQKFQGTLR (94 aa).

The protein belongs to the phenylalanyl-tRNA synthetase beta subunit family. Type 1 subfamily. Tetramer of two alpha and two beta subunits. Mg(2+) serves as cofactor.

The protein localises to the cytoplasm. It catalyses the reaction tRNA(Phe) + L-phenylalanine + ATP = L-phenylalanyl-tRNA(Phe) + AMP + diphosphate + H(+). This is Phenylalanine--tRNA ligase beta subunit from Rickettsia conorii (strain ATCC VR-613 / Malish 7).